Consider the following 340-residue polypeptide: Anthranilate phosphoribosyltransferase (340 aa).

Residues Gly79, 82-83, Ser87, 89-92, 107-115, and Ser119 each bind 5-phospho-alpha-D-ribose 1-diphosphate; these read GD, NIST, and KHGNRSVSS. Gly79 is an anthranilate binding site. Ser91 contacts Mg(2+). An anthranilate-binding site is contributed by Asn110. Arg165 is an anthranilate binding site. Positions 224 and 225 each coordinate Mg(2+).

Belongs to the anthranilate phosphoribosyltransferase family. As to quaternary structure, homodimer. Requires Mg(2+) as cofactor.

It catalyses the reaction N-(5-phospho-beta-D-ribosyl)anthranilate + diphosphate = 5-phospho-alpha-D-ribose 1-diphosphate + anthranilate. Its pathway is amino-acid biosynthesis; L-tryptophan biosynthesis; L-tryptophan from chorismate: step 2/5. Its function is as follows. Catalyzes the transfer of the phosphoribosyl group of 5-phosphorylribose-1-pyrophosphate (PRPP) to anthranilate to yield N-(5'-phosphoribosyl)-anthranilate (PRA). This Oceanobacillus iheyensis (strain DSM 14371 / CIP 107618 / JCM 11309 / KCTC 3954 / HTE831) protein is Anthranilate phosphoribosyltransferase.